Reading from the N-terminus, the 1608-residue chain is Protein REDUCED CHLOROPLAST COVERAGE 3 (1608 aa).

Residues 1-12 (MAPRSSKGKSNN) show a composition bias toward basic residues. Disordered stretches follow at residues 1–22 (MAPRSSKGKSNNKGKGGDKKKR) and 278–303 (VSESASPLPTEDEHWGGNGGGQGRNG). Residues 288–564 (EDEHWGGNGG…KKETDVCGKP (277 aa)) enclose the Clu domain. TPR repeat units follow at residues 848 to 881 (GRTLLESSKLALDKGKLDDAVSYGTKALVKMIAV), 890 to 923 (ACAYSLLAVVLYHTGDFNQATIYQQKALDINERE), 932 to 965 (MKSYGDLSVFYYRLQHFELALKYVNRALFLLHFT), and 974 to 1007 (AATYINVAMMEKEVGNDHLALRYLHEALKSNKRL). Disordered regions lie at residues 1194–1226 (VEESTLDEGWQEAYSKGRSGNGAGRKSRQRQPD), 1238–1292 (HNRN…ASGA), 1369–1400 (KQESQESAESVENLTSESEGDLGSYRGKKTSD), 1466–1499 (TPRSMNPDAPEFVPRRSLQNSSQHAGEDASVSVD), and 1531–1552 (PAALSKTSPEAESGGTSEKDSA). The short motif at 1217–1224 (GRKSRQRQ) is the Nuclear localization signal element. Polar residues-rich tracts occupy residues 1242–1265 (QDVQQQNIYSPLQKTSKGPSLSKS) and 1373–1385 (QESAESVENLTSE). A compositionally biased stretch (polar residues) spans 1535–1546 (SKTSPEAESGGT).

The protein localises to the nucleus. It localises to the cytoplasm. It is found in the cytosol. May act as the scaffold of a protein complex, which sequesters key factors that are required for the G2 to M transition in meristematic tissues. Together with REC2, REC3 and FMT/CLU, contributes to the establishment of the cellular volume devoted to the chloroplast compartment. The chain is Protein REDUCED CHLOROPLAST COVERAGE 3 from Arabidopsis thaliana (Mouse-ear cress).